We begin with the raw amino-acid sequence, 325 residues long: Tetraacyldisaccharide 4'-kinase (325 aa).

54 to 61 (SVGGTGKT) lines the ATP pocket.

Belongs to the LpxK family.

The enzyme catalyses a lipid A disaccharide + ATP = a lipid IVA + ADP + H(+). Its pathway is glycolipid biosynthesis; lipid IV(A) biosynthesis; lipid IV(A) from (3R)-3-hydroxytetradecanoyl-[acyl-carrier-protein] and UDP-N-acetyl-alpha-D-glucosamine: step 6/6. Its function is as follows. Transfers the gamma-phosphate of ATP to the 4'-position of a tetraacyldisaccharide 1-phosphate intermediate (termed DS-1-P) to form tetraacyldisaccharide 1,4'-bis-phosphate (lipid IVA). The sequence is that of Tetraacyldisaccharide 4'-kinase from Rickettsia akari (strain Hartford).